Consider the following 123-residue polypeptide: Putative membrane protein insertion efficiency factor (123 aa).

This sequence belongs to the UPF0161 family.

It localises to the cell inner membrane. In terms of biological role, could be involved in insertion of integral membrane proteins into the membrane. In Beijerinckia indica subsp. indica (strain ATCC 9039 / DSM 1715 / NCIMB 8712), this protein is Putative membrane protein insertion efficiency factor.